Consider the following 480-residue polypeptide: Dimethyl-sulfide monooxygenase (480 aa).

FMN contacts are provided by Asp-58, Thr-104, His-154, Tyr-158, and Ser-230. The disordered stretch occupies residues 423 to 480; the sequence is QDSYKPGSLRRKLIGTNDGRVESTHPAAQYRDAYVGKESVADRTQPSPFANAKAPVAE.

It belongs to the NtaA/SnaA/DszA monooxygenase family. In terms of assembly, heterodimer of 2 subunits, DmoA and DmoB. It depends on FMN as a cofactor.

The catalysed reaction is dimethyl sulfide + NADH + O2 + H(+) = methanethiol + formaldehyde + NAD(+) + H2O. With respect to regulation, inhibited by umbelliferone, 8-anilinonaphthalenesulfonate, a range of metal-chelating agents, and Hg(2+), Cd(2+) and Pb(2+) ions. Monooxygenase that mediates oxidation of dimethyl sulfide, the first step in dimethyl sulfide degradation pathway. Has much lower activity with diethyl sulfide and other short-chain alkyl methyl sulfides. The sequence is that of Dimethyl-sulfide monooxygenase (dmoA) from Hyphomicrobium sulfonivorans.